We begin with the raw amino-acid sequence, 83 residues long: Apolipoprotein C-I (83 aa).

Positions 1-26 (MRLFLSLPVLVVVLSIVLEGPAPAQG) are cleaved as a signal peptide.

This sequence belongs to the apolipoprotein C1 family. Synthesized mainly in liver and to a minor degree in intestine. Also found in the lung and spleen.

It is found in the secreted. Its function is as follows. Inhibitor of lipoprotein binding to the low density lipoprotein (LDL) receptor, LDL receptor-related protein, and very low density lipoprotein (VLDL) receptor. Associates with high density lipoproteins (HDL) and the triacylglycerol-rich lipoproteins in the plasma and makes up about 10% of the protein of the VLDL and 2% of that of HDL. Appears to interfere directly with fatty acid uptake and is also the major plasma inhibitor of cholesteryl ester transfer protein (CETP). Binds free fatty acids and reduces their intracellular esterification. Modulates the interaction of APOE with beta-migrating VLDL and inhibits binding of beta-VLDL to the LDL receptor-related protein. The sequence is that of Apolipoprotein C-I (APOC1) from Homo sapiens (Human).